We begin with the raw amino-acid sequence, 603 residues long: NADH-ubiquinone oxidoreductase chain 5 (603 aa).

The next 15 helical transmembrane spans lie at 4–24 (ISTL…TTLL), 35–55 (ITKT…LLFV), 84–104 (FFSL…MEFS), 121–141 (LLLF…LQLF), 177–197 (IGDM…NSWE), 213–233 (LLGL…HPWL), 241–261 (TPVS…FTLI), 273–293 (VQTS…ICAL), 301–320 (IIAL…IGIN), 325–347 (AFTH…GSII), 366–386 (MPIT…MPFL), 413–433 (LIAV…ALLG), 457–477 (LILG…PHTT), 480–500 (MTMP…GFTV), and 583–603 (LMKL…LIAL).

It belongs to the complex I subunit 5 family. In terms of assembly, core subunit of respiratory chain NADH dehydrogenase (Complex I) which is composed of 45 different subunits.

It is found in the mitochondrion inner membrane. The enzyme catalyses a ubiquinone + NADH + 5 H(+)(in) = a ubiquinol + NAD(+) + 4 H(+)(out). Functionally, core subunit of the mitochondrial membrane respiratory chain NADH dehydrogenase (Complex I) which catalyzes electron transfer from NADH through the respiratory chain, using ubiquinone as an electron acceptor. Essential for the catalytic activity and assembly of complex I. This Mammuthus primigenius (Siberian woolly mammoth) protein is NADH-ubiquinone oxidoreductase chain 5 (MT-ND5).